The following is a 266-amino-acid chain: MHPMLNIAIRAVRKGGNFIIQNYERRKFVKEDVEKNKVFLNNIIYKTNKIISEIIHKSYPYHTILKKHENILVKKNEKNTVWIITELDGKTNFLKYFPYFCVSIAVVVKNKTEISVIYDPIKNDLFTAVKGQGSQLNGYRTRCSAINTLNYSTVAVNPSNKIHNLTSSYFEIYKKLIISGISFRCTGSSILDSAYVAAGKIDCLFDFNLDPNKFVASKLQVREAGCLINNFMGEYEHNNNNYSGNITSSSKFIRLINEKIRECYLI.

Substrate is bound at residue 87–90 (LDGK).

Belongs to the inositol monophosphatase superfamily. In terms of assembly, homodimer. The rRNA transcription and antitermination complex (rrnTAC) consists of RNA polymerase (RNAP), NusA, NusB, NusE (rpsJ), NusG, SubB, ribosomal protein S4, DNA and precursor rRNA; S4 is more flexible than other subunits. It depends on Mg(2+) as a cofactor.

It is found in the cytoplasm. It catalyses the reaction a myo-inositol phosphate + H2O = myo-inositol + phosphate. Part of the processive rRNA transcription and antitermination complex (rrnTAC). The complex forms an RNA-chaperone ring around the RNA exit tunnel of RNA polymerase (RNAP). It supports rapid transcription and antitermination of rRNA operons, cotranscriptional rRNA folding, and annealing of distal rRNA regions to allow correct ribosome biogenesis. This subunit may play a central role in organizing the structure. The chain is Nus factor SuhB (suhB) from Buchnera aphidicola subsp. Acyrthosiphon pisum (strain APS) (Acyrthosiphon pisum symbiotic bacterium).